Reading from the N-terminus, the 157-residue chain is ADP-ribosylation factor-like protein 2-binding protein (157 aa).

Belongs to the ARL2BP family.

The protein localises to the cytoplasm. It is found in the mitochondrion intermembrane space. Its subcellular location is the cytoskeleton. It localises to the microtubule organizing center. The protein resides in the centrosome. The protein localises to the nucleus. It is found in the spindle. Its subcellular location is the cilium basal body. In terms of biological role, plays a role as an effector of the ADP-ribosylation factor-like protein 2, ARL2. The chain is ADP-ribosylation factor-like protein 2-binding protein (arl2bp) from Xenopus tropicalis (Western clawed frog).